The primary structure comprises 71 residues: Protein DP71L (71 aa).

Important for host CHOP inhibition regions lie at residues 16-18 (VRF) and 57-61 (LSAVL).

It belongs to the asfivirus DP71L family. Interacts (via C-terminus) with host PPP1CB.

Interacts with the host phosphatase PP1 catalytic subunit (PPP1CB) and recruits it to dephosphorylate EIF2S1/eIF2alpha and therefore restores the host translation that has been shut-down by the host. Also inhibits the EIF2S1/eIF2alpha-ATF4-DDIT3/CHOP pathway. In Ornithodoros (relapsing fever ticks), this protein is Protein DP71L.